Reading from the N-terminus, the 431-residue chain is E3 ubiquitin-protein ligase RNF128 (431 aa).

An N-terminal signal peptide occupies residues 1-38 (MGQLPGAGVFCRGGCGFSRLLAWCFLLVLSPQTPGSRG). N-linked (GlcNAc...) asparagine glycosylation is found at asparagine 48, asparagine 59, and asparagine 101. In terms of domain architecture, PA spans 75–186 (SPLEPVAGVL…LKGTKILQSI (112 aa)). Residues 211 to 231 (IFFVSVSFFIITAATVGYFIF) traverse the membrane as a helical segment. Residues 280-321 (CAVCIELYKPNDLVRILTCNHVFHKTCVDPWLLEHRTCPMCK) form an RING-type; atypical zinc finger. The span at 345–354 (VSNETSSNAS) shows a compositional bias: polar residues. The segment at 345–431 (VSNETSSNAS…QETTVREIKS (87 aa)) is disordered.

Auto-ubiquitinated. Controls the development of T-cell clonal anergy by ubiquitination.

It localises to the cytoplasm. It is found in the endomembrane system. The protein localises to the cytoskeleton. Its subcellular location is the perinuclear region. It catalyses the reaction S-ubiquitinyl-[E2 ubiquitin-conjugating enzyme]-L-cysteine + [acceptor protein]-L-lysine = [E2 ubiquitin-conjugating enzyme]-L-cysteine + N(6)-ubiquitinyl-[acceptor protein]-L-lysine.. It functions in the pathway protein modification; protein ubiquitination. Its function is as follows. E3 ubiquitin-protein ligase that catalyzes 'Lys-27', 'Lys-48'- or 'Lys-63'-linked polyubiquitin chains formation and plays a role in different biological processes such as modulation of immune response, cytoskeletal dynamics or protein homeostasis. Inhibits IL2 and IL4 transcription, thereby playing an important role in the induction of the anergic phenotype, a long-term stable state of T-lymphocyte unresponsiveness to antigenic stimulation associated with the blockade of interleukin production. Ubiquitinates ARPC5 with 'Lys-48' linkages and COR1A with 'Lys-63' linkages leading to their degradation, down-regulation of these cytoskeletal components results in impaired lamellipodium formation and reduced accumulation of F-actin at the immunological synapse. Functions in the patterning of the dorsal ectoderm; sensitizes ectoderm to respond to neural-inducing signals. Plays a positive role in innate immune response by promoting 'Lys-63'-linked ubiquitination of TBK1 after RNA- or DNA-virus infection. Regulates alveolar macrophage activation and neutrophil infiltration by interacting with TLR4, targeting it for degradation, and inhibiting NF-kappa-B activation, hence decreasing pro-inflammatory cytokines. Negatively regulates the IL-3/STAT5 signaling pathway by facilitating 'Lys-27'-linked polyubiquitination of IL3RA leading to its degradation via lysosomal pathway. Directly regulates the N-glycosylation process in the endoplasmic reticulum by targeting the glycosyl-transferase RPN1 for ubiquitination and degradation. Other substrates targeted for degradation by RNF128 include transmembrane proteins CD40L, CD83 or the tetraspanin CD151. The polypeptide is E3 ubiquitin-protein ligase RNF128 (RNF128) (Bos taurus (Bovine)).